We begin with the raw amino-acid sequence, 125 residues long: MAEGNVFACHSTEGWRSKLQEAIDTKRLVAVDFTATWCGPCRVIGPVFVELSKKFPEIFFLKVDVDELRDVAQEWDVEAMPTFIFIKDGKAVDKVVGAKKDDLERKVAALAAAATTTEATLPAQA.

Residues Ala-2–Ala-112 form the Thioredoxin domain. Active-site nucleophile residues include Cys-38 and Cys-41. The cysteines at positions 38 and 41 are disulfide-linked.

The protein belongs to the thioredoxin family. Plant H-type subfamily.

Its subcellular location is the cytoplasm. Participates in various redox reactions through the reversible oxidation of the active center dithiol to a disulfide. The H form is known to activate a number of cytosolic enzymes. In Picea mariana (Black spruce), this protein is Thioredoxin H-type (SB09).